Reading from the N-terminus, the 483-residue chain is MTVQTFIPNGAKAASENTVTQPTHTTDVSIKKLYIETQGCQMNEYDSHRMADLLGDSHGYVLTNNPNEADILLMNTCSIREKAQEKVFSELGRWRKLKEQNPDLVIGVGGCVASQEGDNIQKRAPYVDMIFGPQTLHRLPQMLDQHHAQVEKPKKEKIKLVDISFPDIEKFDFLPEPRVEGFKAFVSIMEGCSKYCSFCVVPYTRGEEVSRPLDDVLAEIAGLAEKGVREISLLGQNVNGYRGETFEGGICTFPELLRLVAEIPGIGRLRYTTSHPLEFSDELIQCYEDLPQMVSHLHLPVQSGSNDVLKAMKRNHTIDVYIDKIAKLRKIRPDMHLSSDFIIGFPGETDENFAETLQFIKDLDFDHSYSFVYSKRPGTPASDLPDTTPEHVKKERLAQVQQVIKQSSIEKTDAMLGKIERVLIEKVSDQDPNILVGTADNTRLVTFVGDASWIGRFAEIEITEIKTLNLVYGELLNLEPDVA.

In terms of domain architecture, MTTase N-terminal spans 31–148 (KKLYIETQGC…LPQMLDQHHA (118 aa)). 6 residues coordinate [4Fe-4S] cluster: cysteine 40, cysteine 77, cysteine 111, cysteine 192, cysteine 196, and cysteine 199. Positions 178-410 (RVEGFKAFVS…QQVIKQSSIE (233 aa)) constitute a Radical SAM core domain. One can recognise a TRAM domain in the interval 413–477 (DAMLGKIERV…LNLVYGELLN (65 aa)).

This sequence belongs to the methylthiotransferase family. MiaB subfamily. Monomer. [4Fe-4S] cluster serves as cofactor.

It is found in the cytoplasm. It carries out the reaction N(6)-dimethylallyladenosine(37) in tRNA + (sulfur carrier)-SH + AH2 + 2 S-adenosyl-L-methionine = 2-methylsulfanyl-N(6)-dimethylallyladenosine(37) in tRNA + (sulfur carrier)-H + 5'-deoxyadenosine + L-methionine + A + S-adenosyl-L-homocysteine + 2 H(+). Functionally, catalyzes the methylthiolation of N6-(dimethylallyl)adenosine (i(6)A), leading to the formation of 2-methylthio-N6-(dimethylallyl)adenosine (ms(2)i(6)A) at position 37 in tRNAs that read codons beginning with uridine. The polypeptide is tRNA-2-methylthio-N(6)-dimethylallyladenosine synthase (Acinetobacter baumannii (strain ACICU)).